Here is a 526-residue protein sequence, read N- to C-terminus: Peptide chain release factor 3 (526 aa).

The region spanning Asp-9–Leu-277 is the tr-type G domain. GTP contacts are provided by residues Ser-18 to Thr-25, Asp-86 to His-90, and Asn-140 to Asp-143.

The protein belongs to the TRAFAC class translation factor GTPase superfamily. Classic translation factor GTPase family. PrfC subfamily.

It localises to the cytoplasm. Increases the formation of ribosomal termination complexes and stimulates activities of RF-1 and RF-2. It binds guanine nucleotides and has strong preference for UGA stop codons. It may interact directly with the ribosome. The stimulation of RF-1 and RF-2 is significantly reduced by GTP and GDP, but not by GMP. This Geobacter sulfurreducens (strain ATCC 51573 / DSM 12127 / PCA) protein is Peptide chain release factor 3.